We begin with the raw amino-acid sequence, 276 residues long: Rhomboid protease GlpG (276 aa).

The next 6 helical transmembrane spans lie at 94–114 (GPVTWIVMLACVLVYIAMSLI), 142–162 (IFMHFSLMHILFNLLWWWYLG), 169–189 (LGSGKLIVITVISALLSGYVQ), 192–212 (FSGPWFGGLSGVVYALMGYVW), 229–249 (LIIFALLWIVAGWFDWFGMSM), and 250–270 (ANGAHIAGLIVGLAMAFVDTL). Ser-201 acts as the Nucleophile in catalysis. His-254 is a catalytic residue.

The protein belongs to the peptidase S54 family.

It localises to the cell inner membrane. The enzyme catalyses Cleaves type-1 transmembrane domains using a catalytic dyad composed of serine and histidine that are contributed by different transmembrane domains.. In terms of biological role, rhomboid-type serine protease that catalyzes intramembrane proteolysis. The protein is Rhomboid protease GlpG of Salmonella agona (strain SL483).